Consider the following 154-residue polypeptide: uncharacterized protein (154 aa).

The interval 1–37 (MDNLKEKPLSYNINNNNLNNNNNNNNNNNNNNNNINN) is disordered. Low complexity predominate over residues 12 to 37 (NINNNNLNNNNNNNNNNNNNNNNINN). Asn82 carries an N-linked (GlcNAc...) asparagine glycan. The helical transmembrane segment at 116–136 (IIITTIVVLLMIAVSLGLILA) threads the bilayer. Residue Asn149 is glycosylated (N-linked (GlcNAc...) asparagine).

The protein resides in the membrane. This is an uncharacterized protein from Dictyostelium discoideum (Social amoeba).